The primary structure comprises 213 residues: Imidazole glycerol phosphate synthase subunit HisH (213 aa).

A Glutamine amidotransferase type-1 domain is found at 3–213 (MIGVIDYGMG…VGIVTGRENG (211 aa)). Residue Cys81 is the Nucleophile of the active site. Active-site residues include His188 and Glu190.

As to quaternary structure, heterodimer of HisH and HisF.

The protein resides in the cytoplasm. The catalysed reaction is 5-[(5-phospho-1-deoxy-D-ribulos-1-ylimino)methylamino]-1-(5-phospho-beta-D-ribosyl)imidazole-4-carboxamide + L-glutamine = D-erythro-1-(imidazol-4-yl)glycerol 3-phosphate + 5-amino-1-(5-phospho-beta-D-ribosyl)imidazole-4-carboxamide + L-glutamate + H(+). The enzyme catalyses L-glutamine + H2O = L-glutamate + NH4(+). Its pathway is amino-acid biosynthesis; L-histidine biosynthesis; L-histidine from 5-phospho-alpha-D-ribose 1-diphosphate: step 5/9. Its function is as follows. IGPS catalyzes the conversion of PRFAR and glutamine to IGP, AICAR and glutamate. The HisH subunit catalyzes the hydrolysis of glutamine to glutamate and ammonia as part of the synthesis of IGP and AICAR. The resulting ammonia molecule is channeled to the active site of HisF. In Geobacillus thermodenitrificans (strain NG80-2), this protein is Imidazole glycerol phosphate synthase subunit HisH.